The chain runs to 300 residues: Ankyrin repeat domain-containing protein 54 (300 aa).

The tract at residues 1–27 (MAAAAGDADDEPRSGHSSSEGECAVAP) is disordered. Ala-2 carries the post-translational modification N-acetylalanine. 2 positions are modified to phosphoserine: Ser-58 and Ser-63. The Nuclear localization signal (NLS) signature appears at 99–117 (RRLGPTGKEVHALKRLRDS). 4 ANK repeats span residues 109–138 (HALK…DPCA), 142–171 (KGRT…DPNQ), 175–204 (LGNT…RVDA), and 208–244 (AGRT…IIHM). An LYN-binding region spans residues 141–241 (DKGRTALHFA…EAVRLEVKQI (101 aa)). The Nuclear export signal (NES) motif lies at 283–293 (LLASFTSLSLQ).

As to quaternary structure, interacts (via ankyrin repeat region) with LYN (via SH3-domain) in an activation-independent status of LYN. Forms a multiprotein complex with LYN and HCLS1. Interacts with TSN2, VAV1, DBNL and LASP1.

The protein localises to the nucleus. It is found in the cytoplasm. The protein resides in the midbody. Functionally, plays an important role in regulating intracellular signaling events associated with erythroid terminal differentiation. This chain is Ankyrin repeat domain-containing protein 54 (ANKRD54), found in Homo sapiens (Human).